The primary structure comprises 131 residues: Meiotically up-regulated gene 115 protein (131 aa).

The protein localises to the mitochondrion. The protein resides in the nucleus. In terms of biological role, has a role in meiosis. This chain is Meiotically up-regulated gene 115 protein (mug115), found in Schizosaccharomyces pombe (strain 972 / ATCC 24843) (Fission yeast).